The chain runs to 378 residues: Deoxyguanosinetriphosphate triphosphohydrolase-like protein (378 aa).

The interval 1–28 is disordered; that stretch reads MLAPFACQPGESRGRQKPESMSTFRSPF. An HD domain is found at 62-198; sequence RLTHSIEVAQ…AAIADDVAYS (137 aa).

This sequence belongs to the dGTPase family. Type 2 subfamily.

This chain is Deoxyguanosinetriphosphate triphosphohydrolase-like protein, found in Cereibacter sphaeroides (strain ATCC 17029 / ATH 2.4.9) (Rhodobacter sphaeroides).